We begin with the raw amino-acid sequence, 343 residues long: Beta-ketoacyl-[acyl-carrier-protein] synthase III 1 (343 aa).

Residues C122 and H268 contribute to the active site. The ACP-binding stretch occupies residues Q269–R273. N299 is an active-site residue.

The protein belongs to the thiolase-like superfamily. FabH family. As to quaternary structure, homodimer.

Its subcellular location is the cytoplasm. The enzyme catalyses malonyl-[ACP] + acetyl-CoA + H(+) = 3-oxobutanoyl-[ACP] + CO2 + CoA. It functions in the pathway lipid metabolism; fatty acid biosynthesis. Essential enzyme that catalyzes the condensation reaction of fatty acid synthesis by the addition to an acyl acceptor of two carbons from malonyl-ACP. Catalyzes the first condensation reaction which initiates fatty acid synthesis and may therefore play a role in governing the total rate of fatty acid production. Possesses both acetoacetyl-ACP synthase and acetyl transacylase activities. Its substrate specificity determines the biosynthesis of branched-chain of fatty acids. In Streptomyces coelicolor (strain ATCC BAA-471 / A3(2) / M145), this protein is Beta-ketoacyl-[acyl-carrier-protein] synthase III 1.